Here is a 161-residue protein sequence, read N- to C-terminus: SsrA-binding protein (161 aa).

Over residues 139–153 (RESIKRKEENRELDR) the composition is skewed to basic and acidic residues. The tract at residues 139 to 161 (RESIKRKEENRELDRLRKRRRQE) is disordered.

It belongs to the SmpB family.

The protein resides in the cytoplasm. In terms of biological role, required for rescue of stalled ribosomes mediated by trans-translation. Binds to transfer-messenger RNA (tmRNA), required for stable association of tmRNA with ribosomes. tmRNA and SmpB together mimic tRNA shape, replacing the anticodon stem-loop with SmpB. tmRNA is encoded by the ssrA gene; the 2 termini fold to resemble tRNA(Ala) and it encodes a 'tag peptide', a short internal open reading frame. During trans-translation Ala-aminoacylated tmRNA acts like a tRNA, entering the A-site of stalled ribosomes, displacing the stalled mRNA. The ribosome then switches to translate the ORF on the tmRNA; the nascent peptide is terminated with the 'tag peptide' encoded by the tmRNA and targeted for degradation. The ribosome is freed to recommence translation, which seems to be the essential function of trans-translation. The sequence is that of SsrA-binding protein from Syntrophobacter fumaroxidans (strain DSM 10017 / MPOB).